The chain runs to 592 residues: V-type ATP synthase alpha chain (592 aa).

ATP is bound at residue 233-240 (GPFGSGKT).

Belongs to the ATPase alpha/beta chains family.

It catalyses the reaction ATP + H2O + 4 H(+)(in) = ADP + phosphate + 5 H(+)(out). Produces ATP from ADP in the presence of a proton gradient across the membrane. The V-type alpha chain is a catalytic subunit. This Clostridium botulinum (strain Loch Maree / Type A3) protein is V-type ATP synthase alpha chain.